The primary structure comprises 195 residues: Imidazoleglycerol-phosphate dehydratase (195 aa).

It belongs to the imidazoleglycerol-phosphate dehydratase family.

The protein resides in the cytoplasm. The catalysed reaction is D-erythro-1-(imidazol-4-yl)glycerol 3-phosphate = 3-(imidazol-4-yl)-2-oxopropyl phosphate + H2O. It participates in amino-acid biosynthesis; L-histidine biosynthesis; L-histidine from 5-phospho-alpha-D-ribose 1-diphosphate: step 6/9. The polypeptide is Imidazoleglycerol-phosphate dehydratase (Pelobacter propionicus (strain DSM 2379 / NBRC 103807 / OttBd1)).